A 74-amino-acid polypeptide reads, in one-letter code: Small ribosomal subunit protein bS20c (74 aa).

It belongs to the bacterial ribosomal protein bS20 family.

It is found in the plastid. Its subcellular location is the chloroplast. Functionally, binds directly to 16S ribosomal RNA. The protein is Small ribosomal subunit protein bS20c of Cyanidioschyzon merolae (strain NIES-3377 / 10D) (Unicellular red alga).